The following is a 340-amino-acid chain: Uroporphyrinogen decarboxylase (340 aa).

Residues 21–25 (RQAGR), aspartate 71, tyrosine 148, serine 203, and histidine 316 contribute to the substrate site.

It belongs to the uroporphyrinogen decarboxylase family. In terms of assembly, homodimer.

The protein resides in the cytoplasm. It carries out the reaction uroporphyrinogen III + 4 H(+) = coproporphyrinogen III + 4 CO2. Its pathway is porphyrin-containing compound metabolism; protoporphyrin-IX biosynthesis; coproporphyrinogen-III from 5-aminolevulinate: step 4/4. Functionally, catalyzes the decarboxylation of four acetate groups of uroporphyrinogen-III to yield coproporphyrinogen-III. The protein is Uroporphyrinogen decarboxylase of Campylobacter jejuni subsp. jejuni serotype O:23/36 (strain 81-176).